The sequence spans 305 residues: Syntaxin-123 (305 aa).

At Met1 the chain carries N-acetylmethionine. The Cytoplasmic portion of the chain corresponds to 1 to 278 (MNDLISSSFK…KVLQRNNRKW (278 aa)). Residues 46 to 66 (VKEDMKAVDEIHKRLQDANEE) are a coiled coil. One can recognise a t-SNARE coiled-coil homology domain in the interval 206–268 (LSEIQERHDT…MRGTDQLHGA (63 aa)). A helical; Anchor for type IV membrane protein transmembrane segment spans residues 279 to 299 (ACIATILAIVVVIVILFPILF). The Vesicular portion of the chain corresponds to 300–305 (NTLLRP).

This sequence belongs to the syntaxin family. In terms of assembly, part of the t-SNARE complex. As to expression, expressed in tips of root hairs.

It is found in the membrane. In terms of biological role, vesicle trafficking protein that functions in the secretory pathway. Acts in coordination with SYP132 to mediate tip-focused membrane trafficking for root hair tip growth. Functions in root hair elongation by forming SNARE complexes with VAMP721,VAMP722 or VAMP724. The sequence is that of Syntaxin-123 from Arabidopsis thaliana (Mouse-ear cress).